Reading from the N-terminus, the 957-residue chain is Glycine dehydrogenase (decarboxylating) (957 aa).

An N6-(pyridoxal phosphate)lysine modification is found at K708.

It belongs to the GcvP family. As to quaternary structure, the glycine cleavage system is composed of four proteins: P, T, L and H. Pyridoxal 5'-phosphate serves as cofactor.

It carries out the reaction N(6)-[(R)-lipoyl]-L-lysyl-[glycine-cleavage complex H protein] + glycine + H(+) = N(6)-[(R)-S(8)-aminomethyldihydrolipoyl]-L-lysyl-[glycine-cleavage complex H protein] + CO2. The glycine cleavage system catalyzes the degradation of glycine. The P protein binds the alpha-amino group of glycine through its pyridoxal phosphate cofactor; CO(2) is released and the remaining methylamine moiety is then transferred to the lipoamide cofactor of the H protein. The sequence is that of Glycine dehydrogenase (decarboxylating) from Escherichia coli (strain ATCC 8739 / DSM 1576 / NBRC 3972 / NCIMB 8545 / WDCM 00012 / Crooks).